The primary structure comprises 354 residues: uncharacterized protein (354 aa).

The signal sequence occupies residues 1–21; sequence MRYLLIVITFFMGFSSLPAWA.

The protein to E.coli YbgO.

In terms of biological role, may be involved in a fimbrial system chaperoned by YqiH and exported by YqiG. This is an uncharacterized protein from Escherichia coli (strain K12).